The following is a 377-amino-acid chain: Homoserine O-acetyltransferase (377 aa).

An AB hydrolase-1 domain is found at 47–355 (NAILICHALT…DYGHDAFLLE (309 aa)). S153 acts as the Nucleophile in catalysis. R222 lines the substrate pocket. Residues D316 and H349 contribute to the active site. D350 contacts substrate.

The protein belongs to the AB hydrolase superfamily. MetX family. Homodimer.

It is found in the cytoplasm. It catalyses the reaction L-homoserine + acetyl-CoA = O-acetyl-L-homoserine + CoA. It functions in the pathway amino-acid biosynthesis; L-methionine biosynthesis via de novo pathway; O-acetyl-L-homoserine from L-homoserine: step 1/1. Its function is as follows. Transfers an acetyl group from acetyl-CoA to L-homoserine, forming acetyl-L-homoserine. This Deferribacter desulfuricans (strain DSM 14783 / JCM 11476 / NBRC 101012 / SSM1) protein is Homoserine O-acetyltransferase.